Here is a 504-residue protein sequence, read N- to C-terminus: Topoisomerase I damage affected protein 11 (504 aa).

Positions 32–62 (RKTGRKIRSASSNGYRLEHHRTSSAGSMHSQ) are disordered. Positions 179–231 (ALLQSLATKELELLECKQKIEDLKKQTQHEEQNYTRRARELHELKEQVSKHLD) form a coiled coil. At T236 the chain carries Phosphothreonine. 2 positions are modified to phosphoserine: S244 and S286. 3 disordered regions span residues 252–306 (LESR…SKQS), 332–377 (WDDS…SVSR), and 400–504 (DVIT…MTDF). The segment covering 257 to 287 (ENAGNSSLPSSVSKPKNMGHQSTNQSRSVSP) has biased composition (polar residues). Basic and acidic residues predominate over residues 290-301 (IQERRQRDDSSD). 2 stretches are compositionally biased toward polar residues: residues 332 to 359 (WDDS…QQYD) and 368 to 377 (KSPSQGSVSR). The segment covering 403–421 (TDNRCDPVYKSDRQHEQKK) has biased composition (basic and acidic residues). A compositionally biased stretch (basic residues) spans 470–479 (TREKKSKRSS). Over residues 491-504 (DNSSVKNSVEMTDF) the composition is skewed to polar residues.

Belongs to the TDA11 family.

It localises to the cytoplasm. In Saccharomyces cerevisiae (strain Lalvin EC1118 / Prise de mousse) (Baker's yeast), this protein is Topoisomerase I damage affected protein 11 (TDA11).